We begin with the raw amino-acid sequence, 97 residues long: Co-chaperonin GroES (97 aa).

Belongs to the GroES chaperonin family. Heptamer of 7 subunits arranged in a ring. Interacts with the chaperonin GroEL.

The protein resides in the cytoplasm. In terms of biological role, together with the chaperonin GroEL, plays an essential role in assisting protein folding. The GroEL-GroES system forms a nano-cage that allows encapsulation of the non-native substrate proteins and provides a physical environment optimized to promote and accelerate protein folding. GroES binds to the apical surface of the GroEL ring, thereby capping the opening of the GroEL channel. The polypeptide is Co-chaperonin GroES (Elusimicrobium minutum (strain Pei191)).